The chain runs to 1222 residues: ATP-dependent helicase/nuclease subunit A (1222 aa).

One can recognise a UvrD-like helicase ATP-binding domain in the interval 39-495; it reads QKRTAQQIEA…ILLKENFRSQ (457 aa). 60 to 67 is an ATP binding site; that stretch reads ASAGSGKT. The region spanning 524–810 is the UvrD-like helicase C-terminal domain; sequence QLIAGSHAQT…NLMTIHKSKG (287 aa).

This sequence belongs to the helicase family. AddA subfamily. In terms of assembly, heterodimer of AddA and AddB/RexB. Requires Mg(2+) as cofactor.

The enzyme catalyses Couples ATP hydrolysis with the unwinding of duplex DNA by translocating in the 3'-5' direction.. It catalyses the reaction ATP + H2O = ADP + phosphate + H(+). Its function is as follows. The heterodimer acts as both an ATP-dependent DNA helicase and an ATP-dependent, dual-direction single-stranded exonuclease. Recognizes the chi site generating a DNA molecule suitable for the initiation of homologous recombination. The AddA nuclease domain is required for chi fragment generation; this subunit has the helicase and 3' -&gt; 5' nuclease activities. The chain is ATP-dependent helicase/nuclease subunit A from Streptococcus pyogenes serotype M49 (strain NZ131).